The following is a 367-amino-acid chain: Methylthioribose-1-phosphate isomerase (367 aa).

Aspartate 250 acts as the Proton donor in catalysis.

Belongs to the eIF-2B alpha/beta/delta subunits family. MtnA subfamily.

It is found in the cytoplasm. Its subcellular location is the nucleus. The catalysed reaction is 5-(methylsulfanyl)-alpha-D-ribose 1-phosphate = 5-(methylsulfanyl)-D-ribulose 1-phosphate. It participates in amino-acid biosynthesis; L-methionine biosynthesis via salvage pathway; L-methionine from S-methyl-5-thio-alpha-D-ribose 1-phosphate: step 1/6. In terms of biological role, catalyzes the interconversion of methylthioribose-1-phosphate (MTR-1-P) into methylthioribulose-1-phosphate (MTRu-1-P). The chain is Methylthioribose-1-phosphate isomerase (IDI2) from Hordeum vulgare (Barley).